The sequence spans 228 residues: DOPA 4,5-dioxygenase (228 aa).

As to quaternary structure, homodimer. As to expression, expressed at high level in coloured cap tissue and at least 10 times lower level in the stipe.

The protein localises to the cytoplasm. The protein operates within pigment biosynthesis; betalain biosynthesis. Extradiol dioxygenase that opens up the cyclic ring of DOPA between carbons 4 and 5 thus producing an unstable seco-DOPA that rearranges non-enzymatically to betalamic acid. Can also catalyze the formation of muscaflavin (a pigment found in the hygrocybe mushrooms family and of some amanita species only) by a 2,3-extradiol cleavage of DOPA. This is DOPA 4,5-dioxygenase (DODA) from Amanita muscaria (Fly agaric).